Reading from the N-terminus, the 280-residue chain is Mitochondrial outer membrane protein porin 2 (280 aa).

This sequence belongs to the eukaryotic mitochondrial porin (TC 1.B.8.1) family. In terms of tissue distribution, expressed in roots, stems, leaves, palea, lemma and pollen.

The protein resides in the mitochondrion outer membrane. Forms a channel through the mitochondrial outer membrane that allows diffusion of small hydrophilic molecules. The channel adopts an open conformation at low or zero membrane potential and a closed conformation at potentials above 30-40 mV. The open state has a weak anion selectivity whereas the closed state is cation-selective. The polypeptide is Mitochondrial outer membrane protein porin 2 (VDAC2) (Oryza sativa subsp. japonica (Rice)).